Reading from the N-terminus, the 313-residue chain is Porphobilinogen deaminase (313 aa).

Position 242 is an S-(dipyrrolylmethanemethyl)cysteine (cysteine 242).

Belongs to the HMBS family. In terms of assembly, monomer. Requires dipyrromethane as cofactor.

The catalysed reaction is 4 porphobilinogen + H2O = hydroxymethylbilane + 4 NH4(+). It participates in porphyrin-containing compound metabolism; protoporphyrin-IX biosynthesis; coproporphyrinogen-III from 5-aminolevulinate: step 2/4. In terms of biological role, tetrapolymerization of the monopyrrole PBG into the hydroxymethylbilane pre-uroporphyrinogen in several discrete steps. The protein is Porphobilinogen deaminase of Pseudomonas aeruginosa (strain UCBPP-PA14).